Reading from the N-terminus, the 505-residue chain is Buccalin (505 aa).

A signal peptide spans M1–A25. The propeptide occupies E26–R62. V74 bears the Valine amide mark. L88 and L102 each carry leucine amide. At Q106 the chain carries Pyrrolidone carboxylic acid. I116 is modified (isoleucine amide). L129, L143, L157, L171, L185, L199, L213, L227, L241, L254, L267, L281, L294, L307, L321, and L335 each carry leucine amide. E349 carries the post-translational modification Glutamic acid 1-amide. Leucine amide occurs at positions 363, 377, 391, 405, 419, and 433. Residues I447 and I461 each carry the isoleucine amide modification. At Q465 the chain carries Pyrrolidone carboxylic acid. Residues S472 to L505 form a disordered region. L475 bears the Leucine amide mark. Over residues V488–L505 the composition is skewed to basic and acidic residues. Positions S495 to L505 are excised as a propeptide.

In terms of tissue distribution, cholinergic motor neuron B15 innervating buccal muscles in Aplysia.

Its subcellular location is the secreted. Functionally, modulatory neuropeptide, acting presynaptically on nerve terminals to inhibit acetylcholine release. In Aplysia californica (California sea hare), this protein is Buccalin.